The primary structure comprises 446 residues: Sphingomyelinase phosphodiesterase C (446 aa).

An N-terminal signal peptide occupies residues 1–26; the sequence is MKFRNNLTLYLIFIIVFTIYISLTIS. N-linked (GlcNAc...) asparagine glycosylation is present at Asn6. Zn(2+) is bound by residues Asp39 and His41. The cysteines at positions 56 and 78 are disulfide-linked. Zn(2+) is bound at residue Asp107. N-linked (GlcNAc...) asparagine glycosylation is found at Asn118 and Asn128. Residue Asn148 participates in Zn(2+) binding. N-linked (GlcNAc...) asparagine glycosylation is found at Asn178, Asn217, Asn229, and Asn234. Zn(2+) is bound by residues His247, His287, and His289. N-linked (GlcNAc...) asparagine glycosylation is found at Asn342 and Asn357. Cys429 and Cys442 form a disulfide bridge.

Belongs to the acid sphingomyelinase family. The cofactor is Zn(2+).

The protein localises to the secreted. The polypeptide is Sphingomyelinase phosphodiesterase C (sgmC) (Dictyostelium discoideum (Social amoeba)).